Consider the following 117-residue polypeptide: MIVGLGIDLAEIDRFEKAQEKNSRFAEKVLTATEFELFSHYTGRRALEFLAGRFAVKEAFSKAYGTGIGQVKLQAVETLNDPQGKPYIKQDLFDGVVHVSLSHTATLVIAEVILERG.

Mg(2+)-binding residues include D8 and E58.

It belongs to the P-Pant transferase superfamily. AcpS family. Mg(2+) is required as a cofactor.

The protein localises to the cytoplasm. The enzyme catalyses apo-[ACP] + CoA = holo-[ACP] + adenosine 3',5'-bisphosphate + H(+). Its function is as follows. Transfers the 4'-phosphopantetheine moiety from coenzyme A to a Ser of acyl-carrier-protein. This chain is Holo-[acyl-carrier-protein] synthase, found in Latilactobacillus sakei subsp. sakei (strain 23K) (Lactobacillus sakei subsp. sakei).